The chain runs to 500 residues: Protein dcd1B (500 aa).

Positions 1–20 (MNLIKLFIICCLLISITVKS) are cleaved as a signal peptide. N-linked (GlcNAc...) asparagine glycosylation is found at Asn-284, Asn-331, Asn-441, Asn-459, Asn-474, and Asn-475. Residues 464 to 500 (FSEQPPLPPPNNSSSSDSNSNSNSDSSSSSDSNSNSN) are disordered. The segment covering 475 to 500 (NSSSSDSNSNSNSDSSSSSDSNSNSN) has biased composition (low complexity).

It localises to the secreted. This Dictyostelium discoideum (Social amoeba) protein is Protein dcd1B (dcd1B).